The chain runs to 559 residues: Dihydroxy-acid dehydratase 2 (559 aa).

Position 53 (C53) interacts with [2Fe-2S] cluster. Mg(2+) is bound at residue D85. C126 serves as a coordination point for [2Fe-2S] cluster. D127 and K128 together coordinate Mg(2+). The residue at position 128 (K128) is an N6-carboxylysine. [2Fe-2S] cluster is bound at residue C195. E446 is a Mg(2+) binding site. Catalysis depends on S472, which acts as the Proton acceptor.

The protein belongs to the IlvD/Edd family. In terms of assembly, homodimer. It depends on [2Fe-2S] cluster as a cofactor. Mg(2+) is required as a cofactor.

It carries out the reaction (2R)-2,3-dihydroxy-3-methylbutanoate = 3-methyl-2-oxobutanoate + H2O. The catalysed reaction is (2R,3R)-2,3-dihydroxy-3-methylpentanoate = (S)-3-methyl-2-oxopentanoate + H2O. It participates in amino-acid biosynthesis; L-isoleucine biosynthesis; L-isoleucine from 2-oxobutanoate: step 3/4. Its pathway is amino-acid biosynthesis; L-valine biosynthesis; L-valine from pyruvate: step 3/4. Functions in the biosynthesis of branched-chain amino acids. Catalyzes the dehydration of (2R,3R)-2,3-dihydroxy-3-methylpentanoate (2,3-dihydroxy-3-methylvalerate) into 2-oxo-3-methylpentanoate (2-oxo-3-methylvalerate) and of (2R)-2,3-dihydroxy-3-methylbutanoate (2,3-dihydroxyisovalerate) into 2-oxo-3-methylbutanoate (2-oxoisovalerate), the penultimate precursor to L-isoleucine and L-valine, respectively. The chain is Dihydroxy-acid dehydratase 2 from Pseudoalteromonas translucida (strain TAC 125).